Reading from the N-terminus, the 239-residue chain is uncharacterized protein (239 aa).

8 consecutive transmembrane segments (helical) span residues 4-24, 29-49, 61-81, 84-104, 116-136, 139-159, 180-200, and 218-238; these read LIPK…LGMV, VIWH…VYPV, YQKW…ISVF, PPLI…MYFA, VAGV…GMGT, GWAW…SFYV, LLLP…AFIP, and IGIL…LFIT.

This sequence to H.influenzae HI_1626.

It localises to the cell membrane. This is an uncharacterized protein from Bacillus subtilis (strain 168).